The primary structure comprises 580 residues: Viral transcription factor IE2 (580 aa).

Positions 1–11 (MESSAKRKMDP) are enriched in basic and acidic residues. Disordered regions lie at residues 1-30 (MESS…TPVT) and 99-161 (DSSS…VIIK). A compositionally biased stretch (polar residues) spans 99-133 (DSSSTGPTLTTHSCSVSSAPLNKPTPTSVAVTNTP). Residues lysine 175 and lysine 180 each participate in a glycyl lysine isopeptide (Lys-Gly) (interchain with G-Cter in SUMO) cross-link. The SUMO-interacting motif 1/SIM1 motif lies at 199 to 202 (CIVI). Phosphoserine; by host CK2 is present on residues serine 203 and serine 205. Residues 206–335 (EEEQGEEVET…KSKRISELDN (130 aa)) form a disordered region. 3 stretches are compositionally biased toward low complexity: residues 216–236 (RGAT…TSPT), 259–271 (SSSS…SASD), and 302–317 (AASS…SSGG). Residues 410-413 (IQII) carry the SUMO-interacting motif 1/SIM2 motif. An SUMO-interacting motif 1/SIM3 motif is present at residues 501 to 504 (VDLL).

Belongs to the HHV-5 IE2 protein family. As to quaternary structure, interacts with host SUMO-modified form of TATA-binding protein (TBP)-associated factor 12/TAF12 in a SIM-dependent manner; this interaction increases the transactivation activity of IE2. Interacts with host CHAF1A. Interacts with several components of the host transcriptional machinery including TBP, TF2B and CREB1. Interacts with host DNA replication licensing factor MCM3. Interacts with host PLSCR1; this interaction inhibits IE2 transactivating activity. Phosphorylated by host CK2 at Ser-203 and Ser-205; leading to enhanced SUMOylation. In terms of processing, SUMOylated; SUMOylation is enhanced when IE2 is phosphorylated by host CK2. The sumoylation is necessary for efficient replication of the virus and thus for the function of this viral transcription factor.

It is found in the host nucleus. Stimulates viral early and late gene expression and thus play a crucial role in the regulation of productive infection. Selectively drives host RNA Pol II transcription initiation at a subset of viral early-late and late promoters without substantially affecting Pol II transcription of expressed host genes. Mechanistically, forms a repressive complex at the major immediate-early promoter region involving direct association with host nucleosomes and TBP. Concerning activation, stimulates transcription by binding nearby, but not within, core promoter regions. In addition, activates quiescent cells to reenter the cell cycle and up-regulates several E2F-responsive genes, which are responsible for pushing the cell into S phase. In S-phase, inhibits cellular DNA synthesis and blocks further cell cycle progression. The protein is Viral transcription factor IE2 (UL122) of Human cytomegalovirus (strain AD169) (HHV-5).